A 118-amino-acid polypeptide reads, in one-letter code: Ribonuclease P protein component (118 aa).

The protein belongs to the RnpA family. In terms of assembly, consists of a catalytic RNA component (M1 or rnpB) and a protein subunit.

The catalysed reaction is Endonucleolytic cleavage of RNA, removing 5'-extranucleotides from tRNA precursor.. RNaseP catalyzes the removal of the 5'-leader sequence from pre-tRNA to produce the mature 5'-terminus. It can also cleave other RNA substrates such as 4.5S RNA. The protein component plays an auxiliary but essential role in vivo by binding to the 5'-leader sequence and broadening the substrate specificity of the ribozyme. This Mycobacterium sp. (strain KMS) protein is Ribonuclease P protein component.